Consider the following 557-residue polypeptide: Dihydroxy-acid dehydratase (557 aa).

Residue cysteine 50 participates in [2Fe-2S] cluster binding. Residue aspartate 82 coordinates Mg(2+). Residue cysteine 123 participates in [2Fe-2S] cluster binding. Positions 124 and 125 each coordinate Mg(2+). At lysine 125 the chain carries N6-carboxylysine. Residue cysteine 195 coordinates [2Fe-2S] cluster. Mg(2+) is bound at residue glutamate 447. Serine 473 (proton acceptor) is an active-site residue.

This sequence belongs to the IlvD/Edd family. Homodimer. It depends on [2Fe-2S] cluster as a cofactor. The cofactor is Mg(2+).

The enzyme catalyses (2R)-2,3-dihydroxy-3-methylbutanoate = 3-methyl-2-oxobutanoate + H2O. It catalyses the reaction (2R,3R)-2,3-dihydroxy-3-methylpentanoate = (S)-3-methyl-2-oxopentanoate + H2O. It functions in the pathway amino-acid biosynthesis; L-isoleucine biosynthesis; L-isoleucine from 2-oxobutanoate: step 3/4. Its pathway is amino-acid biosynthesis; L-valine biosynthesis; L-valine from pyruvate: step 3/4. Functions in the biosynthesis of branched-chain amino acids. Catalyzes the dehydration of (2R,3R)-2,3-dihydroxy-3-methylpentanoate (2,3-dihydroxy-3-methylvalerate) into 2-oxo-3-methylpentanoate (2-oxo-3-methylvalerate) and of (2R)-2,3-dihydroxy-3-methylbutanoate (2,3-dihydroxyisovalerate) into 2-oxo-3-methylbutanoate (2-oxoisovalerate), the penultimate precursor to L-isoleucine and L-valine, respectively. The protein is Dihydroxy-acid dehydratase of Janthinobacterium sp. (strain Marseille) (Minibacterium massiliensis).